Consider the following 124-residue polypeptide: Small ribosomal subunit protein uS12 (124 aa).

Aspartate 89 is subject to 3-methylthioaspartic acid. The segment at 104-124 (TDGVENRKQSRSKYGTKRPKK) is disordered. A compositionally biased stretch (basic residues) spans 112–124 (QSRSKYGTKRPKK).

Belongs to the universal ribosomal protein uS12 family. Part of the 30S ribosomal subunit. Contacts proteins S8 and S17. May interact with IF1 in the 30S initiation complex.

In terms of biological role, with S4 and S5 plays an important role in translational accuracy. Its function is as follows. Interacts with and stabilizes bases of the 16S rRNA that are involved in tRNA selection in the A site and with the mRNA backbone. Located at the interface of the 30S and 50S subunits, it traverses the body of the 30S subunit contacting proteins on the other side and probably holding the rRNA structure together. The combined cluster of proteins S8, S12 and S17 appears to hold together the shoulder and platform of the 30S subunit. This Thermosipho melanesiensis (strain DSM 12029 / CIP 104789 / BI429) protein is Small ribosomal subunit protein uS12.